Reading from the N-terminus, the 249-residue chain is L-fucose operon activator (249 aa).

Residues 1 to 56 form the HTH deoR-type domain; the sequence is MNYRDELILQWVNQQGKASVIELAQHCDISVETIRRDLNKLANKGLLHRTHGGAVS. Positions 18–37 form a DNA-binding region, H-T-H motif; it reads ASVIELAQHCDISVETIRRD.

In terms of biological role, transcriptional activator of the fuc operon. In Haemophilus influenzae (strain ATCC 51907 / DSM 11121 / KW20 / Rd), this protein is L-fucose operon activator (fucR).